Consider the following 480-residue polypeptide: Glutamate--tRNA ligase (480 aa).

The short motif at 21–31 (PSPTGYLHVGG) is the 'HIGH' region element. Positions 110, 112, 137, and 139 each coordinate Zn(2+). Positions 248–252 (KLSKR) match the 'KMSKS' region motif. Lys251 contributes to the ATP binding site.

Belongs to the class-I aminoacyl-tRNA synthetase family. Glutamate--tRNA ligase type 1 subfamily. Monomer. The cofactor is Zn(2+).

Its subcellular location is the cytoplasm. It carries out the reaction tRNA(Glu) + L-glutamate + ATP = L-glutamyl-tRNA(Glu) + AMP + diphosphate. In terms of biological role, catalyzes the attachment of glutamate to tRNA(Glu) in a two-step reaction: glutamate is first activated by ATP to form Glu-AMP and then transferred to the acceptor end of tRNA(Glu). The polypeptide is Glutamate--tRNA ligase (Actinobacillus succinogenes (strain ATCC 55618 / DSM 22257 / CCUG 43843 / 130Z)).